A 349-amino-acid chain; its full sequence is Homeobox-leucine zipper protein HOX7 (349 aa).

A disordered region spans residues 42–186 (RATRRDEQDD…PKQKSDLANR (145 aa)). 2 stretches are compositionally biased toward polar residues: residues 89–99 (SAETGSANSEM) and 121–135 (SSPS…RQQV). Positions 150–209 (GARKKLRLSKEQSSFLEDSFKEHSTLTPKQKSDLANRLNLRPRQVEVWFQNRRARTKLKQ) form a DNA-binding region, homeobox. Over residues 167–183 (DSFKEHSTLTPKQKSDL) the composition is skewed to basic and acidic residues. The tract at residues 208–252 (KQTEVDCEHLKRCCERLTRENRRLQREVAELRGTLRTTTSSYPPL) is leucine-zipper.

It belongs to the HD-ZIP homeobox family. Class II subfamily. As to quaternary structure, homodimer. May form a heterodimer with HOX1, HOX2 or HOX3. As to expression, expressed in seedlings, roots, leaves, nodes, internodes, flowers and embryo.

Its subcellular location is the nucleus. Functionally, probable transcription factor that binds to the DNA sequence 5'-CAAT[GC]ATTG-3'. This Oryza sativa subsp. japonica (Rice) protein is Homeobox-leucine zipper protein HOX7 (HOX7).